A 553-amino-acid polypeptide reads, in one-letter code: Major facilitator-type transporter hxnZ (553 aa).

5 helical membrane passes run phenylalanine 89–valine 109, valine 128–isoleucine 148, proline 152–serine 172, phenylalanine 174–cysteine 194, and alanine 213–leucine 233. Residue asparagine 235 is glycosylated (N-linked (GlcNAc...) asparagine). Transmembrane regions (helical) follow at residues tyrosine 257–phenylalanine 277, alanine 366–leucine 386, isoleucine 409–leucine 429, tryptophan 433–lysine 453, leucine 459–methionine 481, threonine 496–alanine 516, and proline 525–phenylalanine 545.

Belongs to the major facilitator superfamily.

It is found in the cell membrane. Functionally, major facilitator-type transporter, part of the hnx cluster involved in the purine degradation. The nicotinate hydroxylase hnxS accepts nicotinate as a substrate and catalyzes the first step of nicotinate catabolism. The major facilitator-type transporters hxnP and hxnZ are probably involved in the uptake of nicotinate-derived metabolites, and the oxidoreductases hxnT and hxnY in the further metabolism of 6-OH nicotinic acid. This is Major facilitator-type transporter hxnZ from Emericella nidulans (strain FGSC A4 / ATCC 38163 / CBS 112.46 / NRRL 194 / M139) (Aspergillus nidulans).